Here is a 1119-residue protein sequence, read N- to C-terminus: Leucine-rich repeats and immunoglobulin-like domains protein 3 (1119 aa).

The first 24 residues, 1 to 24, serve as a signal peptide directing secretion; sequence MSAPSLRARAAGLGLLLCAVLGRA. The LRRNT domain maps to 38–74; sequence PSGVAAERPCPTTCRCLGDLLDCSRKRLARLPEPLPS. LRR repeat units follow at residues 75–96, 99–120, 122–142, 146–167, 168–189, 193–214, 216–237, 240–261, 264–285, 288–309, 312–333, 336–357, 360–382, 387–408, and 411–432; these read WVARLDLSHNRLSFIKASSMSH, SLREVKLNNNELETIPNLGPVS, NITLLSLAGNRIVEILPEHLK, SLETLDLSSNNISELQTAFPAL, QLKYLYLNSNRVTSMEPGYFDN, TLLVLKLNRNRISAIPPKMFKL, QLQHLELNRNKIKNVDGLTFQG, ALKSLKMQRNGVTKLMDGAFWG, NMEILQLDHNNLTEITKGWLYG, MLQELHLSQNAINRISPDAWEF, KLSELDLTFNHLSRLDDSSFLG, LLNTLHIGNNRVSYIADCAFRG, SLKTLDLKNNEISWTIEDMNGAF, KLRRLILQGNRIRSITKKAFTG, and ALEHLDLSDNAIMSLQGNAFSQ. N-linked (GlcNAc...) asparagine glycans are attached at residues asparagine 122 and asparagine 156. N-linked (GlcNAc...) asparagine glycosylation is present at asparagine 274. N-linked (GlcNAc...) asparagine glycans are attached at residues asparagine 442, asparagine 469, and asparagine 515. The 52-residue stretch at 444–495 folds into the LRRCT domain; the sequence is SSLLCDCQLKWLPQWVAENNFQSFVNASCAHPQLLKGRSIFAVSPDGFVCDD. 3 Ig-like C2-type domains span residues 499 to 598, 603 to 692, and 697 to 783; these read PQIT…AKLT, PSFT…ATLT, and PSFL…VRLS. Intrachain disulfides connect cysteine 520–cysteine 581 and cysteine 624–cysteine 676. N-linked (GlcNAc...) asparagine glycans are attached at residues asparagine 688 and asparagine 729. Residues cysteine 718 and cysteine 767 are joined by a disulfide bond. The chain crosses the membrane as a helical span at residues 810-830; that stretch reads VVIIAVVCCVVGTSLVWVVII. N-linked (GlcNAc...) asparagine glycosylation is found at asparagine 905, asparagine 987, asparagine 999, and asparagine 1016. The segment at 1073-1093 is disordered; the sequence is SSPDLDSGSEEDGKERTDFQE. Basic and acidic residues predominate over residues 1083-1093; sequence EDGKERTDFQE.

In terms of assembly, interacts with EGFR, ERBB2 and ERBB4 (in vitro). In terms of tissue distribution, widely expressed.

The protein localises to the cell membrane. It localises to the cytoplasmic vesicle membrane. May play a role in craniofacial and inner ear morphogenesis during embryonic development. May act within the otic vesicle epithelium to control formation of the lateral semicircular canal in the inner ear, possibly by restricting the expression of NTN1. The polypeptide is Leucine-rich repeats and immunoglobulin-like domains protein 3 (LRIG3) (Homo sapiens (Human)).